The chain runs to 204 residues: Pro-glucagon (204 aa).

The first 20 residues, 1–20, serve as a signal peptide directing secretion; that stretch reads MTSMYFVAGLLLMIVQGSWQ. A propeptide spanning residues 84–109 is cleaved from the precursor; it reads SGQQGVEEREKENLLDQLSSNGLARH. Residue R145 is modified to Arginine amide. Propeptides lie at residues 149–161 and 197–204; these read DFLE…DDIG and RDLLGEYQ.

Belongs to the glucagon family. Isoform LPII is expressed in both pancreas and intestine. Expression of isoform LPI is restricted to the pancreas. Neither isoform is detected in salivary glands.

Its subcellular location is the secreted. In terms of biological role, plays a key role in glucose metabolism and homeostasis. Regulates blood glucose by increasing gluconeogenesis and decreasing glycolysis. Potent stimulator of glucose-dependent insulin release. Plays important roles on gastric motility and the suppression of plasma glucagon levels. Functionally, stimulates intestinal growth and up-regulates villus height in the small intestine, concomitant with increased crypt cell proliferation and decreased enterocyte apoptosis. This is Pro-glucagon (GCG) from Heloderma suspectum (Gila monster).